Consider the following 440-residue polypeptide: Chromosome partition protein MukF (440 aa).

Residues 208–236 form a leucine-zipper region; sequence LSETSGTLRELQDTLEAAGDKLQANLLRI.

This sequence belongs to the MukF family. Interacts, and probably forms a ternary complex, with MukE and MukB via its C-terminal region. The complex formation is stimulated by calcium or magnesium. It is required for an interaction between MukE and MukB.

Its subcellular location is the cytoplasm. The protein localises to the nucleoid. Involved in chromosome condensation, segregation and cell cycle progression. May participate in facilitating chromosome segregation by condensation DNA from both sides of a centrally located replisome during cell division. Not required for mini-F plasmid partitioning. Probably acts via its interaction with MukB and MukE. Overexpression results in anucleate cells. It has a calcium binding activity. The protein is Chromosome partition protein MukF of Salmonella arizonae (strain ATCC BAA-731 / CDC346-86 / RSK2980).